Consider the following 225-residue polypeptide: Non-structural protein V (225 aa).

Residues Pro65 to Lys72 form a nuclear localization signal region. Positions Ser145–Asp157 are enriched in polar residues. Positions Ser145–Asn173 are disordered. 8 residues coordinate Zn(2+): His174, Cys193, Cys197, Cys209, Cys211, Cys214, Cys218, and Cys221.

The protein belongs to the paramyxoviruses V protein family. In terms of assembly, interacts with host IFIH1/MDA5 and DHX58/LGP2. Forms with host DDB1, CUL4A, STAT1 and STAT2 the HPIV2 virus V-dependent complex (VDC); this complex targets host STAT2 to proteasomal degradation.

It is found in the host nucleus. Plays an essential role in the inhibition of host immune response. Prevents the establishment of cellular antiviral state by blocking interferon-alpha/beta (IFN-alpha/beta) production and signaling pathway. Interacts with host IFIH1/MDA5 and DHX58/LGP2 to inhibit the transduction pathway involved in the activation of IFN-beta promoter, thus protecting the virus against cell antiviral state. Efficiently blocks type I IFN signaling following infection by targeting host STAT2 for proteasomal degradation. Also plays a role in viral growth by promoting host RhoA-induced F-actin formation. The sequence is that of Non-structural protein V (P/V) from Homo sapiens (Human).